The sequence spans 175 residues: uncharacterized protein (175 aa).

A mitochondrion-targeting transit peptide spans 1–11; sequence METWRKGSFRN. Residues 24-92 are disordered; sequence RRLRRQSSVL…PRLYRESSSC (69 aa). The segment covering 41-63 has biased composition (basic and acidic residues); it reads GDHEEYSNREVIRELQGRPDGRR.

The protein localises to the mitochondrion. This is an uncharacterized protein from Homo sapiens (Human).